Consider the following 132-residue polypeptide: Profilin (132 aa).

The protein belongs to the profilin family. As to quaternary structure, occurs in many kinds of cells as a complex with monomeric actin in a 1:1 ratio.

Its subcellular location is the cytoplasm. It is found in the cytoskeleton. Binds to actin and affects the structure of the cytoskeleton. At high concentrations, profilin prevents the polymerization of actin, whereas it enhances it at low concentrations. By binding to PIP2, it inhibits the formation of IP3 and DG. The sequence is that of Profilin from Naegleria pringsheimi (Amoeba).